A 483-amino-acid chain; its full sequence is Peroxisomal biogenesis factor 3 (483 aa).

Over Met1–Lys14 the chain is Peroxisomal. Residues Phe15–Phe35 form a helical membrane-spanning segment. Residues Ser36–Leu483 are Cytoplasmic-facing. Disordered stretches follow at residues Gly119 to Thr149 and Asn230 to Ile253. Residues Ser242–Ile253 are compositionally biased toward polar residues.

The protein belongs to the peroxin-3 family.

The protein localises to the peroxisome membrane. In terms of biological role, involved in peroxisome biosynthesis. The polypeptide is Peroxisomal biogenesis factor 3 (PEX3) (Kluyveromyces lactis (strain ATCC 8585 / CBS 2359 / DSM 70799 / NBRC 1267 / NRRL Y-1140 / WM37) (Yeast)).